Reading from the N-terminus, the 376-residue chain is MSYKFGKLAINKSELCLANVLQAGQSFRWIWDEKLNQYSTTMKIGQQEKYSVVILRQDEENEILEFVAVGDCGNQDALKTHLMKYFRLDVSLKHLFDNVWIPSDKAFAKLSPQGIRILAQEPWETLISFICSSNNNISRITRMCNSLCSNFGNLITTIDGVAYHSFPTSEELTSRATEAKLRELGFGYRAKYIIETARKLVNDKAEANITSDTTYLQSICKDAQYEDVREHLMSYNGVGPKVADCVCLMGLHMDGIVPVDVHVSRIAKRDYQISANKNHLKELRTKYNALPISRKKINLELDHIRLMLFKKWGSYAGWAQGVLFSKEIGGTSGSTTTGTIKKRKWDMIKETEAIVTKQMKLKVELSDLHIKEAKID.

DNA is bound by residues Asn-134, Arg-139, and Arg-189. The active-site Schiff-base intermediate with DNA is Lys-241. Positions 258 and 260 each coordinate 8-oxoguanine. Residue His-262 participates in DNA binding. 8-oxoguanine is bound by residues Gln-320 and Phe-324.

Belongs to the type-1 OGG1 family.

It is found in the nucleus. It carries out the reaction 2'-deoxyribonucleotide-(2'-deoxyribose 5'-phosphate)-2'-deoxyribonucleotide-DNA = a 3'-end 2'-deoxyribonucleotide-(2,3-dehydro-2,3-deoxyribose 5'-phosphate)-DNA + a 5'-end 5'-phospho-2'-deoxyribonucleoside-DNA + H(+). Functionally, DNA repair enzyme that incises DNA at 8-oxoG residues. Excises 7,8-dihydro-8-oxoguanine and 2,6-diamino-4-hydroxy-5-N-methylformamidopyrimidine (FAPY) from damaged DNA. Has a beta-lyase activity that nicks DNA 3' to the lesion. The chain is N-glycosylase/DNA lyase (OGG1) from Saccharomyces cerevisiae (strain ATCC 204508 / S288c) (Baker's yeast).